A 264-amino-acid polypeptide reads, in one-letter code: S-adenosylmethionine decarboxylase proenzyme (264 aa).

Serine 112 serves as the catalytic Schiff-base intermediate with substrate; via pyruvic acid. Serine 112 is subject to Pyruvic acid (Ser); by autocatalysis. Histidine 117 (proton acceptor; for processing activity) is an active-site residue. Cysteine 140 acts as the Proton donor; for catalytic activity in catalysis.

It belongs to the prokaryotic AdoMetDC family. Type 2 subfamily. As to quaternary structure, heterooctamer of four alpha and four beta chains arranged as a tetramer of alpha/beta heterodimers. The cofactor is pyruvate. Post-translationally, is synthesized initially as an inactive proenzyme. Formation of the active enzyme involves a self-maturation process in which the active site pyruvoyl group is generated from an internal serine residue via an autocatalytic post-translational modification. Two non-identical subunits are generated from the proenzyme in this reaction, and the pyruvate is formed at the N-terminus of the alpha chain, which is derived from the carboxyl end of the proenzyme. The post-translation cleavage follows an unusual pathway, termed non-hydrolytic serinolysis, in which the side chain hydroxyl group of the serine supplies its oxygen atom to form the C-terminus of the beta chain, while the remainder of the serine residue undergoes an oxidative deamination to produce ammonia and the pyruvoyl group blocking the N-terminus of the alpha chain.

The enzyme catalyses S-adenosyl-L-methionine + H(+) = S-adenosyl 3-(methylsulfanyl)propylamine + CO2. Its pathway is amine and polyamine biosynthesis; S-adenosylmethioninamine biosynthesis; S-adenosylmethioninamine from S-adenosyl-L-methionine: step 1/1. Functionally, catalyzes the decarboxylation of S-adenosylmethionine to S-adenosylmethioninamine (dcAdoMet), the propylamine donor required for the synthesis of the polyamines spermine and spermidine from the diamine putrescine. The sequence is that of S-adenosylmethionine decarboxylase proenzyme from Hamiltonella defensa subsp. Acyrthosiphon pisum (strain 5AT).